Reading from the N-terminus, the 574-residue chain is Probable E3 ubiquitin-protein ligase ipaH4.5 (574 aa).

Positions 1–284 (MKPINNHSFF…YHGPQIYFSM (284 aa)) are interaction with target proteins. 10 LRR repeats span residues 63 to 82 (REPV…PLPL), 83 to 104 (HIRE…SPLL), 105 to 122 (TELH…TLPS), 123 to 143 (QLIK…SLPP), 144 to 165 (YLQS…PSTL), 166 to 183 (TILR…ELPH), 184 to 205 (RLQE…PQSL), 206 to 223 (KYLK…RLPQ), 224 to 246 (ELLA…ITLP), and 247 to 270 (ICTN…QRLT). Residues 285 to 292 (SDGQQNTL) form a linker region. An E3 ubiquitin-protein ligase catalytic domain region spans residues 293–574 (HRPLADAVTA…YRQLTDEVLA (282 aa)). The NEL domain occupies 295–574 (PLADAVTAWF…YRQLTDEVLA (280 aa)). The Glycyl thioester intermediate role is filled by C379.

Belongs to the LRR-containing bacterial E3 ligase family. Ubiquitinated in the presence of host E1 ubiquitin-activating enzyme, E2 ubiquitin-conjugating enzyme and ubiquitin.

Its subcellular location is the secreted. It is found in the host cytoplasm. It carries out the reaction S-ubiquitinyl-[E2 ubiquitin-conjugating enzyme]-L-cysteine + [acceptor protein]-L-lysine = [E2 ubiquitin-conjugating enzyme]-L-cysteine + N(6)-ubiquitinyl-[acceptor protein]-L-lysine.. In terms of biological role, effector proteins function to alter host cell physiology and promote bacterial survival in host tissues. This protein is an E3 ubiquitin ligase that interferes with host's ubiquitination pathway. The polypeptide is Probable E3 ubiquitin-protein ligase ipaH4.5 (ipaH4.5) (Shigella flexneri).